A 2979-amino-acid chain; its full sequence is Polyketide synthase-nonribosomal peptide synthetase TwmB (2979 aa).

In terms of domain architecture, Ketosynthase family 3 (KS3) spans 5–435 (GAEIAIIGSG…GTNAHAILES (431 aa)). Residues cysteine 176, histidine 315, and histidine 355 each act as for beta-ketoacyl synthase activity in the active site. Residues 549-864 (VFTGQGAQWA…PYTGLFTRGV (316 aa)) are malonyl-CoA:ACP transacylase (MAT) domain. The For malonyltransferase activity role is filled by serine 643. The interval 936–1070 (HDLLGHLTPN…GRVRIHLGEA (135 aa)) is N-terminal hotdog fold. Positions 936–1234 (HDLLGHLTPN…ECVPFSRQTA (299 aa)) are dehydratase (DH) domain. One can recognise a PKS/mFAS DH domain in the interval 936-1235 (HDLLGHLTPN…CVPFSRQTAK (300 aa)). Histidine 968 functions as the Proton acceptor; for dehydratase activity in the catalytic mechanism. Residues 1085 to 1235 (LVSVSEKKFY…CVPFSRQTAK (151 aa)) form a C-terminal hotdog fold region. The Proton donor; for dehydratase activity role is filled by aspartate 1141. An inactive methyltransferase (MT) domain region spans residues 1387–1572 (NFTAHLAGIL…GIDTSTVEQP (186 aa)). The segment at 2098 to 2271 (TYWLVGLTGG…AASVMDIGAV (174 aa)) is ketoreductase (KR)domain. Residues 2380 to 2465 (RNNEEAYGIV…ELVDTATEAI (86 aa)) enclose the Carrier domain. The residue at position 2425 (serine 2425) is an O-(pantetheine 4'-phosphoryl)serine. The segment at 2476-2497 (YPAEQTSSQNSDSGQDMASSFD) is disordered. Positions 2479 to 2497 (EQTSSQNSDSGQDMASSFD) are enriched in polar residues. The segment at 2534-2970 (KSIPVSFTQA…MTLGQAALAE (437 aa)) is condensation.

In terms of assembly, interacts with TwmE. Requires pantetheine 4'-phosphate as cofactor.

It catalyses the reaction 5-aminopentanoate + 7 malonyl-CoA + acetyl-CoA + 11 NADPH + 17 H(+) = wortmanamide A + 7 CO2 + 11 NADP(+) + 8 CoA + 6 H2O. The catalysed reaction is 5-aminopentanoate + 8 malonyl-CoA + acetyl-CoA + 13 NADPH + 20 H(+) = wortmanamide B + 8 CO2 + 13 NADP(+) + 9 CoA + 7 H2O. It functions in the pathway secondary metabolite biosynthesis. Polyketide synthase-nonribosomal peptide synthetase; part of the gene cluster that mediates the biosynthesis of wortmanamides A and B, reduced long-chain polyketides amidated with a specific omega-amino acid, 5-aminopentanoic acid (5PA). The PKS modules of TwmB are involved in the synthesis of the polyketide backbone, whereas the non-canonical C domain of TwmB is a bonafide condensation domain that specifically selects 5PA and catalyzes amidation to release polyketide chain. The C domain clearly prefers C16 and C18 fatty acyl substrates, which is consistent with simultaneous formation of both octaketide and nonaketide acyl amides wortmanamides A and B. Because TwmB lacks a designated enoylreductase (ER) domain, the required activity is provided the enoyl reductase TwmE. The roles of the remaining enzymes have still to be clarified. The sequence is that of Polyketide synthase-nonribosomal peptide synthetase TwmB from Talaromyces wortmannii (Penicillium wortmannii).